The following is a 213-amino-acid chain: TVP38/TMEM64 family membrane protein YtxB (213 aa).

Transmembrane regions (helical) follow at residues 9-29 (WLAV…YLNV), 34-54 (IRVW…GISI), 58-78 (LVLF…GPLL), 81-101 (LYTL…AGLF), 159-179 (AVGI…FLAG), and 181-201 (LPAF…PFIF).

It belongs to the TVP38/TMEM64 family.

It localises to the cell membrane. The protein is TVP38/TMEM64 family membrane protein YtxB (ytxB) of Bacillus subtilis (strain 168).